The following is a 130-amino-acid chain: Small ribosomal subunit protein uS11c (130 aa).

It belongs to the universal ribosomal protein uS11 family. As to quaternary structure, part of the 30S ribosomal subunit.

The protein resides in the plastid. The protein localises to the chloroplast. This Trieres chinensis (Marine centric diatom) protein is Small ribosomal subunit protein uS11c.